The primary structure comprises 503 residues: SH2 domain-containing adapter protein B (503 aa).

2 disordered regions span residues 1-49 (MAKW…QACS) and 61-81 (CFSASSGSLPDDSGSTSDLIR). Residue S101 is modified to Phosphoserine. The segment covering 147 to 157 (AAASSSSSSGS) has biased composition (low complexity). Residues 147–180 (AAASSSSSSGSPHLYRSSSERRPTTPAEVRYISP) form a disordered region. A Glycyl lysine isopeptide (Lys-Gly) (interchain with G-Cter in SUMO2) cross-link involves residue K186. Disordered stretches follow at residues 225–262 (ETGAGQKDKVTIADDYSDPFDAKSDLKSKAGKGESAGY), 292–333 (DTPY…YDQP), and 345–381 (AAQFNGNEKRQSSPSPSRDRRRQLRAPGGGFKPIKHG). The span at 244 to 256 (FDAKSDLKSKAGK) shows a compositional bias: basic and acidic residues. 2 positions are modified to phosphoserine: S301 and S311. Residues 301-311 (SVDSDSESTVS) show a composition bias toward polar residues. Residues 313-328 (RLRESKLPQDDDRPAD) show a composition bias toward basic and acidic residues. S382 is modified (phosphoserine). Residues 404-498 (WYHGAISRSD…AEHLSLLYPV (95 aa)) form the SH2 domain.

In terms of assembly, interacts with phosphorylated 'Tyr-720' of the ligand-activated receptor PDGFRA via its SH2 domain. Interacts with the ligand-activated receptors PDGFRB, FGFR1, KDR/VEGFR2, IL2RB and IL2RG. Interacts with EPS8 and V-SRC. Interacts with GRB2 and GRAP. Interacts with CD3Z. Interacts with tyrosine-phosphorylated LAT upon T-cell antigen receptor activation. Interacts with PLCG1. Interacts with ZAP70, LCP2/SLP-76, VAV1 and GRAP2. Interacts with JAK1 and JAK3. Interacts with PTK2/FAK1. Interacts with CRK/CrKII. Interacts with IRS2. Interacts with PTPN11. In terms of processing, phosphorylated upon PDGFRA, PDGFRB, TCR, IL2 receptor, FGFR1 or VEGFR2 activation. Expressed in heart, liver, brain and kidney (at protein level).

It localises to the cytoplasm. The protein resides in the cell membrane. Functionally, adapter protein which regulates several signal transduction cascades by linking activated receptors to downstream signaling components. May play a role in angiogenesis by regulating FGFR1, VEGFR2 and PDGFR signaling. May also play a role in T-cell antigen receptor/TCR signaling, interleukin-2 signaling, apoptosis and neuronal cells differentiation by mediating basic-FGF and NGF-induced signaling cascades. May also regulate IRS1 and IRS2 signaling in insulin-producing cells. This is SH2 domain-containing adapter protein B (Shb) from Mus musculus (Mouse).